A 620-amino-acid polypeptide reads, in one-letter code: Cryptochrome-1 (620 aa).

A Photolyase/cryptochrome alpha/beta domain is found at 3–132 (VNAVHWFRKG…EVIVRISHTL (130 aa)). 3 consecutive short sequence motifs (LIR) follow at residues 50–54 (NRWRF), 82–87 (DVFPRL), and 151–156 (KRFQTL). S252 is an FAD binding site. Short sequence motifs (LIR) lie at residues 255–260 (LRFGCL), 271–276 (DLYKKV), 285–290 (SLYGQL), and 335–339 (TGFPW). Q289 contacts FAD. H355 serves as a coordination point for FAD. The short motif at 379 to 384 (KVFEEL) is the LIR 8 element. 387 to 389 (DAD) is a binding site for FAD. 5 short sequence motifs (LIR) span residues 395-400 (GSWMWL), 411-416 (HCYCPV), 430-435 (RRYLPV), 486-491 (QIYQQL), and 492-497 (SRYRGL). The tract at residues 593–620 (TGISAGKRPNPEEETQSVGPKVQRQSTN) is disordered.

It belongs to the DNA photolyase class-1 family. As to quaternary structure, component of the circadian core oscillator, which includes the CRY proteins, CLOCK or NPAS2, BMAL1 or BMAL2, CSNK1E, and the PER proteins. FAD is required as a cofactor. The cofactor is (6R)-5,10-methylene-5,6,7,8-tetrahydrofolate. In terms of tissue distribution, expressed in the retina.

The protein localises to the cytoplasm. Its subcellular location is the nucleus. Its function is as follows. Transcriptional repressor which forms a core component of the circadian clock. The circadian clock, an internal time-keeping system, regulates various physiological processes through the generation of approximately 24 hour circadian rhythms in gene expression, which are translated into rhythms in metabolism and behavior. It is derived from the Latin roots 'circa' (about) and 'diem' (day) and acts as an important regulator of a wide array of physiological functions including metabolism, sleep, body temperature, blood pressure, endocrine, immune, cardiovascular, and renal function. Consists of two major components: the central clock, residing in the suprachiasmatic nucleus (SCN) of the brain, and the peripheral clocks that are present in nearly every tissue and organ system. Both the central and peripheral clocks can be reset by environmental cues, also known as Zeitgebers (German for 'timegivers'). The predominant Zeitgeber for the central clock is light, which is sensed by retina and signals directly to the SCN. The central clock entrains the peripheral clocks through neuronal and hormonal signals, body temperature and feeding-related cues, aligning all clocks with the external light/dark cycle. Circadian rhythms allow an organism to achieve temporal homeostasis with its environment at the molecular level by regulating gene expression to create a peak of protein expression once every 24 hours to control when a particular physiological process is most active with respect to the solar day. Transcription and translation of core clock components (CLOCK, NPAS2, BMAL1, BMAL2, PER1, PER2, PER3, CRY1 and CRY2) plays a critical role in rhythm generation, whereas delays imposed by post-translational modifications (PTMs) are important for determining the period (tau) of the rhythms (tau refers to the period of a rhythm and is the length, in time, of one complete cycle). A diurnal rhythm is synchronized with the day/night cycle, while the ultradian and infradian rhythms have a period shorter and longer than 24 hours, respectively. Disruptions in the circadian rhythms contribute to the pathology of cardiovascular diseases, cancer, metabolic syndromes and aging. A transcription/translation feedback loop (TTFL) forms the core of the molecular circadian clock mechanism. Transcription factors, CLOCK or NPAS2 and BMAL1 or BMAL2, form the positive limb of the feedback loop, act in the form of a heterodimer and activate the transcription of core clock genes and clock-controlled genes (involved in key metabolic processes), harboring E-box elements (5'-CACGTG-3') within their promoters. The core clock genes: PER1/2/3 and CRY1/2 which are transcriptional repressors form the negative limb of the feedback loop and interact with the CLOCK|NPAS2-BMAL1|BMAL2 heterodimer inhibiting its activity and thereby negatively regulating their own expression. This heterodimer also activates nuclear receptors NR1D1/2 and RORA/B/G, which form a second feedback loop and which activate and repress BMAL1 transcription, respectively. CRY1 and CRY2 have redundant functions but also differential and selective contributions at least in defining the pace of the SCN circadian clock and its circadian transcriptional outputs. More potent transcriptional repressor in cerebellum and liver than CRY2, though more effective in lengthening the period of the SCN oscillator. On its side, CRY2 seems to play a critical role in tuning SCN circadian period by opposing the action of CRY1. With CRY2, is dispensable for circadian rhythm generation but necessary for the development of intercellular networks for rhythm synchrony. Capable of translocating circadian clock core proteins such as PER proteins to the nucleus. Interacts with CLOCK-BMAL1 independently of PER proteins and is found at CLOCK-BMAL1-bound sites, suggesting that CRY may act as a molecular gatekeeper to maintain CLOCK-BMAL1 in a poised and repressed state until the proper time for transcriptional activation. This chain is Cryptochrome-1 (CRY1), found in Erithacus rubecula (European robin).